A 1823-amino-acid chain; its full sequence is Vitellogenin (1823 aa).

A signal peptide spans 1 to 14; the sequence is MWKLLLVALAFALA. The residue at position 17 (glutamine 17) is a Pyrrolidone carboxylic acid. The Vitellogenin domain occupies 18–658; that stretch reads FQPGKVYRYS…SPSGPLPRAV (641 aa). The disordered stretch occupies residues 953–986; that stretch reads KGLISQQQQQPHHQQQPHQHGQDQARAAYQRPWA. The span at 958 to 976 shows a compositional bias: low complexity; the sequence is QQQQQPHHQQQPHQHGQDQ. Asparagine 1097 carries an N-linked (GlcNAc...) asparagine glycan. The tract at residues 1119–1289 is disordered; the sequence is SDKDKDAKKP…SSSSSESKSL (171 aa). Low complexity-rich tracts occupy residues 1128–1149 and 1178–1192; these read PPGSSSSSSSSSSSSSSSSSSD and SSSSSSSSSSSSDSS. The segment covering 1194–1206 has biased composition (basic residues); that stretch reads SPHKHGGAKRQHA. Low complexity-rich tracts occupy residues 1217-1238 and 1253-1286; these read SHSSSSSSSSSSSSSSASKSFS and SSSSSSSSDSSSSSSSSSSSSSSSSSSSSSSSES. An N-linked (GlcNAc...) asparagine glycan is attached at asparagine 1298. Residues 1308 to 1351 form a disordered region; that stretch reads VPQRKPQTSRRHTPASSSSSSSSSSSSSSSSSSSDSDMTVSAES. Residues 1323-1344 show a composition bias toward low complexity; the sequence is SSSSSSSSSSSSSSSSSSSDSD. Positions 1564 to 1732 constitute a VWFD domain; it reads SACELNEQSL…SWIAPDETCG (169 aa). 2 disulfides stabilise this stretch: cysteine 1566–cysteine 1695 and cysteine 1589–cysteine 1731. N-linked (GlcNAc...) asparagine glycosylation is present at asparagine 1675.

What corresponds to phosvitin in other species is lost during maturation of vitellogenin to lipovitellin. In terms of tissue distribution, produced by the liver, secreted into the blood and then sequestered by receptor mediated endocytosis into growing oocytes, where it is generally cleaved, giving rise to the respective yolk components lipovitellins 1 and 2.

Functionally, precursor of the major egg-yolk proteins that are sources of nutrients during early development of oviparous organisms. This Ichthyomyzon unicuspis (Silver lamprey) protein is Vitellogenin.